The chain runs to 127 residues: Small ribosomal subunit protein uS13 (127 aa).

Residues 93–127 (RRSLPVRGQRTHTNARTRKGPRRGTVAGKKKATKT) are disordered.

This sequence belongs to the universal ribosomal protein uS13 family. As to quaternary structure, part of the 30S ribosomal subunit. Forms a loose heterodimer with protein S19. Forms two bridges to the 50S subunit in the 70S ribosome.

Functionally, located at the top of the head of the 30S subunit, it contacts several helices of the 16S rRNA. In the 70S ribosome it contacts the 23S rRNA (bridge B1a) and protein L5 of the 50S subunit (bridge B1b), connecting the 2 subunits; these bridges are implicated in subunit movement. Contacts the tRNAs in the A and P-sites. The polypeptide is Small ribosomal subunit protein uS13 (Acidobacterium capsulatum (strain ATCC 51196 / DSM 11244 / BCRC 80197 / JCM 7670 / NBRC 15755 / NCIMB 13165 / 161)).